Reading from the N-terminus, the 294-residue chain is N-acetylmuramic acid 6-phosphate etherase (294 aa).

The SIS domain maps to 54–217 (VIKSFEEEGR…STASMIGVGK (164 aa)). The active-site Proton donor is the glutamate 82. Residue glutamate 113 is part of the active site.

This sequence belongs to the GCKR-like family. MurNAc-6-P etherase subfamily. In terms of assembly, homodimer.

It carries out the reaction N-acetyl-D-muramate 6-phosphate + H2O = N-acetyl-D-glucosamine 6-phosphate + (R)-lactate. Its pathway is amino-sugar metabolism; N-acetylmuramate degradation. Specifically catalyzes the cleavage of the D-lactyl ether substituent of MurNAc 6-phosphate, producing GlcNAc 6-phosphate and D-lactate. The protein is N-acetylmuramic acid 6-phosphate etherase of Bacillus cereus (strain AH187).